We begin with the raw amino-acid sequence, 637 residues long: CREB-regulated transcription coactivator 3 (637 aa).

Serine 66 carries the post-translational modification Phosphoserine. Residues 105-115 show a composition bias toward basic residues; that stretch reads NRLHSSHHRPI. Disordered stretches follow at residues 105–184 and 269–288; these read NRLH…SLQD and HFPS…YANI. At serine 133 the chain carries Phosphoserine. Threonine 143 is modified (phosphothreonine). Serine 145 bears the Phosphoserine; by SIK2 mark. The span at 145 to 159 shows a compositional bias: polar residues; it reads SDSALHTSASSTKSQ. Position 151 is a phosphothreonine (threonine 151). Position 293 is a phosphoserine (serine 293). The tract at residues 299–462 is disordered; that stretch reads AMTHLGISGS…QNYQPPSPVP (164 aa). The segment covering 309 to 337 has biased composition (polar residues); that stretch reads PGMQNTRSNPSIQATMNNNSLASNVNSHT. Residues 344 to 365 show a composition bias toward low complexity; that stretch reads PALHPSLRLSSLSNPSLPTSAL. A phosphoserine mark is found at serine 377 and serine 396. Over residues 377–395 the composition is skewed to polar residues; sequence SPLTLTPGSESNRSISNQF. Residues 396-407 are compositionally biased toward low complexity; that stretch reads SPTSPMNMPPNS. Pro residues predominate over residues 418–429; it reads SLPPLEPPPPYP. The segment covering 430–447 has biased composition (low complexity); that stretch reads LYSDQPQPHLHHTQQQMH. A Phosphoserine modification is found at serine 561. Positions 615–637 are disordered; that stretch reads MLSDPDMVLPDPSIEDSFRSDKL.

It belongs to the TORC family. In terms of assembly, binding, as a tetramer, through its N-terminal region, with the bZIP domain of creb1 enhances recruitment of taf4 to the promoter. 'Arg-300' in the bZIP domain of creb1 is essential for this interaction.

The protein localises to the nucleus. The protein resides in the cytoplasm. In terms of biological role, transcriptional coactivator for creb1 which activates transcription through both consensus and variant cAMP response element (CRE) sites. Acts as a coactivator, in the SIK/TORC signaling pathway, being active when dephosphorylated and acts independently of creb1 'Ser-119' phosphorylation. Enhances the interaction of creb1 with taf4. Regulates the expression of specific CREB-activated genes such as the steroidogenic gene, StAR. Potent coactivator of ppargc1a and inducer of mitochondrial biogenesis in muscle cells. The protein is CREB-regulated transcription coactivator 3 (crtc3) of Xenopus tropicalis (Western clawed frog).